The chain runs to 346 residues: uncharacterized protein (346 aa).

This is an uncharacterized protein from Acanthamoeba polyphaga (Amoeba).